The chain runs to 194 residues: FK506-binding protein 3 (194 aa).

The signal sequence occupies residues 1-19; it reads MNKFLIALLVLATLAVSFS. The 90-residue stretch at 44 to 133 folds into the PPIase FKBP-type domain; the sequence is GDYISLKYVG…YFDLEVVSIE (90 aa). A helical transmembrane segment spans residues 148–168; sequence VGTIIAFSMLAGFIVLVKFII. The disordered stretch occupies residues 173–194; it reads DESNSKKPAPGKPKKTKAAKQN. A compositionally biased stretch (basic residues) spans 184–194; it reads KPKKTKAAKQN.

This sequence belongs to the FKBP-type PPIase family.

The protein resides in the membrane. It catalyses the reaction [protein]-peptidylproline (omega=180) = [protein]-peptidylproline (omega=0). Its activity is regulated as follows. Inhibited by both FK506 and rapamycin. Functionally, PPIases accelerate the folding of proteins by catalyzing the cis-trans isomerization of proline imidic peptide bonds in oligopeptides. This chain is FK506-binding protein 3 (fkbp3), found in Dictyostelium discoideum (Social amoeba).